The following is a 185-amino-acid chain: Adenine phosphoribosyltransferase (185 aa).

This sequence belongs to the purine/pyrimidine phosphoribosyltransferase family. As to quaternary structure, homodimer.

The protein resides in the cytoplasm. It carries out the reaction AMP + diphosphate = 5-phospho-alpha-D-ribose 1-diphosphate + adenine. It functions in the pathway purine metabolism; AMP biosynthesis via salvage pathway; AMP from adenine: step 1/1. Catalyzes a salvage reaction resulting in the formation of AMP, that is energically less costly than de novo synthesis. The polypeptide is Adenine phosphoribosyltransferase (Rubrobacter xylanophilus (strain DSM 9941 / JCM 11954 / NBRC 16129 / PRD-1)).